The following is a 370-amino-acid chain: Leucine-rich repeat and transmembrane domain-containing protein 2 (370 aa).

The signal sequence occupies residues 1-35; it reads MLAPGSSPGQRGRLALQWRQVSWITCWIALYAVEA. Residues 36–68 form the LRRNT domain; that stretch reads LPTCPFSCKCDSRSLEVDCSGLGLTTVPPDVPA. Over 36-310 the chain is Extracellular; it reads LPTCPFSCKC…PASVRRAMGT (275 aa). 5 LRR repeats span residues 69–90, 93–114, 117–139, 141–162, and 165–186; these read ATRTLLLLNNKLSALPSWAFAN, SLQRLDLSNNFLDRLPRSIFGD, NLTELQLRNNSIRTLDRDLLRHS, LLRHLDLSINGLAQLPPGLFDG, and ALRSLSLRSNRLQNLDRLTFEP. Asn90 is a glycosylation site (N-linked (GlcNAc...) asparagine). Asn117 and Asn125 each carry an N-linked (GlcNAc...) asparagine glycan. The LRRCT domain occupies 198–252; it reads NPWECDCNLREFKHWMEWFSYRGGRLDQLACTLPKELRGKDMRMVPMEMFNYCSQ. An N-linked (GlcNAc...) asparagine glycan is attached at Asn257. The segment at 261 to 300 is disordered; it reads GLDIPGPPCTKASPEPAKPKPGAEPEPEPSTACPQKQRHR. A helical transmembrane segment spans residues 311–331; sequence VIIAGVVCGVVCIMMVVAAAY. Residues 332 to 370 lie on the Cytoplasmic side of the membrane; that stretch reads GCIYASLMAKYHRELKKRQPLMGDPEGEHEDQKQISSVA. Residues 351–370 are disordered; it reads PLMGDPEGEHEDQKQISSVA.

Its subcellular location is the membrane. This Homo sapiens (Human) protein is Leucine-rich repeat and transmembrane domain-containing protein 2 (LRTM2).